Consider the following 287-residue polypeptide: Shikimate dehydrogenase (NADP(+)) (287 aa).

Shikimate is bound by residues 20-22 (SRS) and Thr-67. The active-site Proton acceptor is Lys-71. Glu-84 is a binding site for NADP(+). Shikimate contacts are provided by Asn-93 and Asp-108. Residues 132–136 (GAGGA) and Met-226 contribute to the NADP(+) site. Tyr-228 lines the shikimate pocket. Gly-250 provides a ligand contact to NADP(+).

This sequence belongs to the shikimate dehydrogenase family. Homodimer.

The catalysed reaction is shikimate + NADP(+) = 3-dehydroshikimate + NADPH + H(+). Its pathway is metabolic intermediate biosynthesis; chorismate biosynthesis; chorismate from D-erythrose 4-phosphate and phosphoenolpyruvate: step 4/7. Its function is as follows. Involved in the biosynthesis of the chorismate, which leads to the biosynthesis of aromatic amino acids. Catalyzes the reversible NADPH linked reduction of 3-dehydroshikimate (DHSA) to yield shikimate (SA). The sequence is that of Shikimate dehydrogenase (NADP(+)) from Bordetella petrii (strain ATCC BAA-461 / DSM 12804 / CCUG 43448).